The primary structure comprises 430 residues: KIN17-like protein (430 aa).

A C2H2-type zinc finger spans residues 28–50 (CQMCQKQCRDENGFKCHCMSESH). Residues 51–160 (QRQMQVFGQA…KARLKRKRIK (110 aa)) are winged helix-turn-helix (wHTH). Residues 147 to 183 (EQAVKARLKRKRIKSDLAEDERQERMIARQIERAQQS) adopt a coiled-coil conformation. The short motif at 155–158 (KRKR) is the Nuclear localization signal (NLS) element. Disordered regions lie at residues 179-230 (RAQQ…ANKA) and 261-284 (EEEDEVSARDKEKEELAKKKGKDA). Acidic residues predominate over residues 191–224 (LGDDASPDGSEGESGSEDEYSDSENDHEGQEEDA). Basic and acidic residues predominate over residues 261–278 (EEEDEVSARDKEKEELAK). Residues 283–312 (DAINAAEARRSALDELMKEEEKAKERSNRK) adopt a coiled-coil conformation. The C-terminal subdomain A stretch occupies residues 319 to 370 (GIVVKVMSKSLAEKGYCKQKGVVKRVIDKYVGEIEMLESKHVLRVDQDELET). The C-terminal subdomain B stretch occupies residues 376–427 (GGLVRIVNGAYRGSNARLLSVDTERFCAKVQVEKGLYDGKVLKAIEYEDICK).

The protein belongs to the KIN17 family.

It is found in the nucleus. This Oryza sativa subsp. japonica (Rice) protein is KIN17-like protein.